Consider the following 435-residue polypeptide: 3-phosphoshikimate 1-carboxyvinyltransferase (435 aa).

3-phosphoshikimate contacts are provided by K15, S16, and R20. K15 contributes to the phosphoenolpyruvate binding site. 2 residues coordinate phosphoenolpyruvate: G96 and R124. 3-phosphoshikimate contacts are provided by S169, Q171, T195, D319, and K346. Q171 is a binding site for phosphoenolpyruvate. The active-site Proton acceptor is the D319. Phosphoenolpyruvate-binding residues include R350 and R394.

This sequence belongs to the EPSP synthase family. As to quaternary structure, monomer.

Its subcellular location is the cytoplasm. The enzyme catalyses 3-phosphoshikimate + phosphoenolpyruvate = 5-O-(1-carboxyvinyl)-3-phosphoshikimate + phosphate. It functions in the pathway metabolic intermediate biosynthesis; chorismate biosynthesis; chorismate from D-erythrose 4-phosphate and phosphoenolpyruvate: step 6/7. In terms of biological role, catalyzes the transfer of the enolpyruvyl moiety of phosphoenolpyruvate (PEP) to the 5-hydroxyl of shikimate-3-phosphate (S3P) to produce enolpyruvyl shikimate-3-phosphate and inorganic phosphate. The sequence is that of 3-phosphoshikimate 1-carboxyvinyltransferase from Chloroherpeton thalassium (strain ATCC 35110 / GB-78).